The primary structure comprises 89 residues: Small ribosomal subunit protein uS15 (89 aa).

It belongs to the universal ribosomal protein uS15 family. Part of the 30S ribosomal subunit. Forms a bridge to the 50S subunit in the 70S ribosome, contacting the 23S rRNA.

Functionally, one of the primary rRNA binding proteins, it binds directly to 16S rRNA where it helps nucleate assembly of the platform of the 30S subunit by binding and bridging several RNA helices of the 16S rRNA. Forms an intersubunit bridge (bridge B4) with the 23S rRNA of the 50S subunit in the ribosome. In Rhizorhabdus wittichii (strain DSM 6014 / CCUG 31198 / JCM 15750 / NBRC 105917 / EY 4224 / RW1) (Sphingomonas wittichii), this protein is Small ribosomal subunit protein uS15.